Consider the following 252-residue polypeptide: uncharacterized protein (252 aa).

2 stretches are compositionally biased toward polar residues: residues 108-122 (RTTM…SSSE) and 136-153 (MPNT…NSQS). The interval 108 to 252 (RTTMRQGRFP…LIWNDSSSSK (145 aa)) is disordered. Residues 154-172 (TEKEDAMYSKDNGFEDRSK) show a composition bias toward basic and acidic residues. Residues 201-226 (VKSTDSAFSGQENSEAFPSRTSNLGS) are compositionally biased toward polar residues.

It is found in the cytoplasm. Its subcellular location is the mitochondrion. The protein resides in the nucleus. This is an uncharacterized protein from Schizosaccharomyces pombe (strain 972 / ATCC 24843) (Fission yeast).